Here is a 231-residue protein sequence, read N- to C-terminus: Large ribosomal subunit protein uL1 (231 aa).

Belongs to the universal ribosomal protein uL1 family. In terms of assembly, part of the 50S ribosomal subunit.

Its function is as follows. Binds directly to 23S rRNA. The L1 stalk is quite mobile in the ribosome, and is involved in E site tRNA release. In terms of biological role, protein L1 is also a translational repressor protein, it controls the translation of the L11 operon by binding to its mRNA. This chain is Large ribosomal subunit protein uL1, found in Staphylococcus haemolyticus (strain JCSC1435).